A 447-amino-acid chain; its full sequence is UDP-N-acetylmuramate--L-alanine ligase (447 aa).

ATP is bound at residue G108 to S114.

The protein belongs to the MurCDEF family.

It localises to the cytoplasm. It catalyses the reaction UDP-N-acetyl-alpha-D-muramate + L-alanine + ATP = UDP-N-acetyl-alpha-D-muramoyl-L-alanine + ADP + phosphate + H(+). Its pathway is cell wall biogenesis; peptidoglycan biosynthesis. Its function is as follows. Cell wall formation. The polypeptide is UDP-N-acetylmuramate--L-alanine ligase (Listeria monocytogenes serotype 4b (strain F2365)).